The primary structure comprises 153 residues: Large ribosomal subunit protein uL13 (153 aa).

The protein belongs to the universal ribosomal protein uL13 family. Part of the 50S ribosomal subunit.

Its function is as follows. This protein is one of the early assembly proteins of the 50S ribosomal subunit, although it is not seen to bind rRNA by itself. It is important during the early stages of 50S assembly. This Methylobacterium nodulans (strain LMG 21967 / CNCM I-2342 / ORS 2060) protein is Large ribosomal subunit protein uL13.